A 978-amino-acid polypeptide reads, in one-letter code: Regulator of telomere elongation helicase 1 homolog (978 aa).

The region spanning 7-318 is the Helicase ATP-binding domain; sequence NGIPVNFPFE…EDDDAKKDFT (312 aa). 42–49 contributes to the ATP binding site; it reads SPTGTGKT. The [4Fe-4S] cluster site is built by C159, C177, C186, and C222. The DEAH box motif lies at 265-268; the sequence is DEAH.

It belongs to the helicase family. RAD3/XPD subfamily.

It is found in the nucleus. The enzyme catalyses ATP + H2O = ADP + phosphate + H(+). Its function is as follows. A probable ATP-dependent DNA helicase implicated in DNA repair and the maintenance of genomic stability. Acts as an anti-recombinase to counteract toxic recombination and limit crossover during meiosis. Regulates meiotic recombination and crossover homeostasis by physically dissociating strand invasion events and thereby promotes noncrossover repair by meiotic synthesis dependent strand annealing (SDSA) as well as disassembly of D loop recombination intermediates. The sequence is that of Regulator of telomere elongation helicase 1 homolog from Culex quinquefasciatus (Southern house mosquito).